The following is a 130-amino-acid chain: Small ribosomal subunit protein uS11 (130 aa).

This sequence belongs to the universal ribosomal protein uS11 family. In terms of assembly, part of the 30S ribosomal subunit. Interacts with proteins S7 and S18. Binds to IF-3.

Its function is as follows. Located on the platform of the 30S subunit, it bridges several disparate RNA helices of the 16S rRNA. Forms part of the Shine-Dalgarno cleft in the 70S ribosome. The protein is Small ribosomal subunit protein uS11 of Prochlorococcus marinus (strain MIT 9303).